Reading from the N-terminus, the 524-residue chain is MSQPVTPRRTTRSSASASPSPAPASPTSPPKSRPKPSPRRQLLAAAAAPPKEDGSSADALLAELPGRRAQAMDILRLLAPAPALPLMLHGGAATGKTRALLLALRYLRPSQRLVYAALRSLPSPRALFASLLSQLSATPFSTSSRHRVPDKPSDFVAALRDALNGIVSQGEVVYLVFDNLEVVRSWDKGGQLLPLLLRLHDLLQLPQVVLVYVSSATPDAYYSMTGSVEPNYVYFPDYTVDEVRDILMHDHPNPKLYSSFLSVALKPLFRVTRRVDELSAVLEPLFRRYCEPLGDLKAVPDEGMKRRLFEHVQSHLAVALNETFNVPMRASMDEIKDGGSAGKGSAKRQFAGKDGLSSELEFHMSVSAKYLLLSAFLASRNPATLDAALFDSTGGLDNRKRKRKSSQASMHMKDTIVEEMLMKGPGTFPLERLLAIFQCITSVSEDILDEIDCPGNMASESGTTGLMSDVLLQLSTLCNSNFLSKSRSCPLEGSARYRSNIDEDLALKVARSVNFPLSKYMYRR.

Residues 1 to 19 (MSQPVTPRRTTRSSASASP) are compositionally biased toward low complexity. The tract at residues 1-56 (MSQPVTPRRTTRSSASASPSPAPASPTSPPKSRPKPSPRRQLLAAAAAPPKEDGSS) is disordered. Pro residues predominate over residues 20-31 (SPAPASPTSPPK). Residues 39 to 49 (RRQLLAAAAAP) are compositionally biased toward low complexity. 90-97 (GGAATGKT) serves as a coordination point for ATP.

Belongs to the ORC5 family. Component of the origin recognition complex (ORC) composed of at least ORC1, ORC2, ORC3, ORC4, ORC5 and ORC6. ORC is regulated in a cell-cycle and development dependent manner. It is sequentially assembled at the exit from anaphase of mitosis and disassembled as cells enter S phase.

It is found in the nucleus. In terms of biological role, component of the origin recognition complex (ORC) that binds origins of replication. DNA-binding is ATP-dependent. The specific DNA sequences that define origins of replication have not been identified yet. ORC is required to assemble the pre-replication complex necessary to initiate DNA replication. The polypeptide is Origin of replication complex subunit 5 (Oryza sativa subsp. indica (Rice)).